Consider the following 306-residue polypeptide: D-alanine--D-alanine ligase (306 aa).

Residues 105-300 (KMIWQAAGIS…FDELVIQILE (196 aa)) enclose the ATP-grasp domain. 131–186 (TDRLGLPLIIKPAREGSTIGLNKVDYAQDMQSAYQTAAQHDSLVIAEQFIQGIELT) lines the ATP pocket. Positions 254, 267, and 269 each coordinate Mg(2+).

This sequence belongs to the D-alanine--D-alanine ligase family. Mg(2+) serves as cofactor. The cofactor is Mn(2+).

Its subcellular location is the cytoplasm. It catalyses the reaction 2 D-alanine + ATP = D-alanyl-D-alanine + ADP + phosphate + H(+). It functions in the pathway cell wall biogenesis; peptidoglycan biosynthesis. In terms of biological role, cell wall formation. The sequence is that of D-alanine--D-alanine ligase from Nitrosomonas eutropha (strain DSM 101675 / C91 / Nm57).